We begin with the raw amino-acid sequence, 617 residues long: Zinc finger protein 613 (617 aa).

In terms of domain architecture, KRAB spans leucine 8 to proline 78. C2H2-type zinc fingers lie at residues histidine 204–histidine 226, histidine 232–histidine 254, tyrosine 260–histidine 282, tyrosine 288–histidine 310, histidine 316–histidine 338, tyrosine 344–histidine 366, tyrosine 372–histidine 394, tyrosine 400–histidine 422, tyrosine 428–histidine 450, phenylalanine 456–histidine 478, tyrosine 484–histidine 506, and tyrosine 512–histidine 535.

It belongs to the krueppel C2H2-type zinc-finger protein family.

It localises to the nucleus. Functionally, may be involved in transcriptional regulation. The polypeptide is Zinc finger protein 613 (ZNF613) (Homo sapiens (Human)).